We begin with the raw amino-acid sequence, 217 residues long: Transmembrane protein 247 (217 aa).

A compositionally biased stretch (basic and acidic residues) spans 1-10 (MATEDREMME). The segment at 1-87 (MATEDREMME…GPATTKGQAG (87 aa)) is disordered. Residues 109–154 (RERDAEMELEKVRMEFELKRLKYLHEENERQRQHEEVMEQLQQQAT) adopt a coiled-coil conformation. 2 helical membrane passes run 165–185 (LLLPQNQFAMFLYCFIFIHII) and 192–212 (IFFLFSKHYLFCIAAILLCLI).

It localises to the membrane. The polypeptide is Transmembrane protein 247 (Bos taurus (Bovine)).